Here is an 886-residue protein sequence, read N- to C-terminus: Isoleucine--tRNA ligase (886 aa).

The 'HIGH' region motif lies at 60-70; the sequence is PYANGDIHIGH. Glutamate 546 is a binding site for L-isoleucyl-5'-AMP. Residues 587–591 carry the 'KMSKS' region motif; it reads KMSKS. Lysine 590 is an ATP binding site. Positions 856, 859, 870, and 873 each coordinate Zn(2+).

This sequence belongs to the class-I aminoacyl-tRNA synthetase family. IleS type 1 subfamily. Monomer. Requires Zn(2+) as cofactor.

Its subcellular location is the cytoplasm. It catalyses the reaction tRNA(Ile) + L-isoleucine + ATP = L-isoleucyl-tRNA(Ile) + AMP + diphosphate. Functionally, catalyzes the attachment of isoleucine to tRNA(Ile). As IleRS can inadvertently accommodate and process structurally similar amino acids such as valine, to avoid such errors it has two additional distinct tRNA(Ile)-dependent editing activities. One activity is designated as 'pretransfer' editing and involves the hydrolysis of activated Val-AMP. The other activity is designated 'posttransfer' editing and involves deacylation of mischarged Val-tRNA(Ile). The chain is Isoleucine--tRNA ligase from Mesomycoplasma hyopneumoniae (strain J / ATCC 25934 / NCTC 10110) (Mycoplasma hyopneumoniae).